The following is a 324-amino-acid chain: BURP domain-containing protein 5 (324 aa).

A signal peptide spans 1 to 30; it reads MCATLCTLLDEISILILMLLLIQLEIRVSA. The BURP domain maps to 109-323; the sequence is FFLETNLQSS…QPDVVVWTRR (215 aa).

As to expression, expressed in panicles.

This Oryza sativa subsp. japonica (Rice) protein is BURP domain-containing protein 5 (BURP5).